Consider the following 317-residue polypeptide: Ribosomal RNA small subunit methyltransferase H (317 aa).

S-adenosyl-L-methionine is bound by residues 32 to 34 (GGH), aspartate 51, phenylalanine 78, aspartate 99, and glutamine 106.

This sequence belongs to the methyltransferase superfamily. RsmH family.

It is found in the cytoplasm. The catalysed reaction is cytidine(1402) in 16S rRNA + S-adenosyl-L-methionine = N(4)-methylcytidine(1402) in 16S rRNA + S-adenosyl-L-homocysteine + H(+). Functionally, specifically methylates the N4 position of cytidine in position 1402 (C1402) of 16S rRNA. This chain is Ribosomal RNA small subunit methyltransferase H, found in Helicobacter hepaticus (strain ATCC 51449 / 3B1).